Reading from the N-terminus, the 517-residue chain is Ribonuclease Y (517 aa).

The chain crosses the membrane as a helical span at residues 1 to 21; that stretch reads MIESLIALIAAIVGLGIGYLV. Residues 207-273 enclose the KH domain; sequence LINVINIKND…TKVIELLVED (67 aa). Residues 333–426 form the HD domain; it reads ALAHSLEVAH…VCAADTLSAA (94 aa).

This sequence belongs to the RNase Y family.

The protein resides in the cell membrane. Functionally, endoribonuclease that initiates mRNA decay. This chain is Ribonuclease Y, found in Campylobacter jejuni subsp. jejuni serotype O:2 (strain ATCC 700819 / NCTC 11168).